The sequence spans 28 residues: 3,4-dihydroxybenzoate decarboxylase (28 aa).

Homopentamer.

It catalyses the reaction 3,4-dihydroxybenzoate + H(+) = catechol + CO2. With respect to regulation, inhibited by oxygen. Completely inhibited by HgCl(2). Partially inhibited by ZnSO(4), 2,3,4-trihydroxybeonzoate and 3,4,5-trihydroxybeonzoate. Unaffected by KCl, MnCl(2) or EDTA. Not stimulated by thiamine phosphate, pyridoxal 5'-phosphate or biotin. Not inhibited by hydroxylamine, NaBH(4) or avidin. Functionally, reversibly catalyzes the decarboxylation of 3,4-dihydroxybenzoate to catechol. Inactive toward 4-hydroxybenzoate and other benzoate derivatives. This Sedimentibacter hydroxybenzoicus (Clostridium hydroxybenzoicum) protein is 3,4-dihydroxybenzoate decarboxylase.